Here is a 293-residue protein sequence, read N- to C-terminus: Tumor necrosis factor receptor type 1-associated DEATH domain protein (293 aa).

A Nuclear export signal motif is present at residues 156–171 (LRDDEVTQLEQQLQNS). Residues 200 to 290 (TPADQQRFAA…SMAEIMLGIQ (91 aa)) form the Death domain. The Nuclear localization signal signature appears at 216-229 (KRVGRALQKNCRAL).

In terms of assembly, heterodimer with tnfrsf1a.

The protein resides in the nucleus. Its subcellular location is the cytoplasm. The protein localises to the cytoskeleton. Adapter molecule for tnfrsf1a that specifically associates with the cytoplasmic domain of activated tnfrsf1a mediating its interaction with fadd. The chain is Tumor necrosis factor receptor type 1-associated DEATH domain protein from Danio rerio (Zebrafish).